A 39-amino-acid chain; its full sequence is Potassium channel toxin alpha-KTx 2.18 (39 aa).

Intrachain disulfides connect C7/C29, C13/C34, and C17/C36. The residue at position 39 (I39) is an Isoleucine amide.

Belongs to the short scorpion toxin superfamily. Potassium channel inhibitor family. Alpha-KTx 02 subfamily. Expressed by the venom gland.

It is found in the secreted. Functionally, weakly blocks Kv1.3/KCNA3 voltage-gated potassium channels. The sequence is that of Potassium channel toxin alpha-KTx 2.18 from Centruroides limpidus (Mexican scorpion).